The primary structure comprises 418 residues: UDP-N-acetylglucosamine 1-carboxyvinyltransferase (418 aa).

Phosphoenolpyruvate is bound at residue 22-23 (KN). Position 92 (Arg92) interacts with UDP-N-acetyl-alpha-D-glucosamine. The active-site Proton donor is the Cys116. Position 116 is a 2-(S-cysteinyl)pyruvic acid O-phosphothioketal (Cys116). Residues 121–125 (RPIDL), Asp305, and Leu327 each bind UDP-N-acetyl-alpha-D-glucosamine.

This sequence belongs to the EPSP synthase family. MurA subfamily.

The protein resides in the cytoplasm. It carries out the reaction phosphoenolpyruvate + UDP-N-acetyl-alpha-D-glucosamine = UDP-N-acetyl-3-O-(1-carboxyvinyl)-alpha-D-glucosamine + phosphate. Its pathway is cell wall biogenesis; peptidoglycan biosynthesis. Cell wall formation. Adds enolpyruvyl to UDP-N-acetylglucosamine. The polypeptide is UDP-N-acetylglucosamine 1-carboxyvinyltransferase (Campylobacter jejuni subsp. jejuni serotype O:6 (strain 81116 / NCTC 11828)).